Reading from the N-terminus, the 391-residue chain is Curcumin synthase 2 (391 aa).

Residue Cys166 is part of the active site.

This sequence belongs to the thiolase-like superfamily. Chalcone/stilbene synthases family. Homodimer.

The enzyme catalyses (E)-feruloylacetyl-CoA + (E)-feruloyl-CoA + H2O = curcumin + CO2 + 2 CoA. The protein operates within secondary metabolite biosynthesis; flavonoid biosynthesis. In terms of biological role, catalyzes the synthesis of curcumin by condensing feruloyl-CoA with a diketide-CoA in the curcuminoid biosynthesis. This Curcuma longa (Turmeric) protein is Curcumin synthase 2 (CURS2).